Reading from the N-terminus, the 366-residue chain is Lipase member J (366 aa).

The active-site Nucleophile is the serine 141. Residues aspartate 312 and histidine 341 each act as charge relay system in the active site.

This sequence belongs to the AB hydrolase superfamily. Lipase family.

The sequence is that of Lipase member J (LIPJ) from Homo sapiens (Human).